Reading from the N-terminus, the 448-residue chain is Probable ribonuclease FAU-1 (448 aa).

It belongs to the FAU-1 family.

Functionally, probable RNase involved in rRNA stability through maturation and/or degradation of precursor rRNAs. Binds to RNA in loop regions with AU-rich sequences. This chain is Probable ribonuclease FAU-1, found in Pyrobaculum calidifontis (strain DSM 21063 / JCM 11548 / VA1).